A 294-amino-acid chain; its full sequence is Ribosomal protein L11 methyltransferase (294 aa).

Positions 146, 167, 189, and 231 each coordinate S-adenosyl-L-methionine.

Belongs to the methyltransferase superfamily. PrmA family.

It is found in the cytoplasm. The catalysed reaction is L-lysyl-[protein] + 3 S-adenosyl-L-methionine = N(6),N(6),N(6)-trimethyl-L-lysyl-[protein] + 3 S-adenosyl-L-homocysteine + 3 H(+). Its function is as follows. Methylates ribosomal protein L11. The chain is Ribosomal protein L11 methyltransferase from Aliivibrio fischeri (strain ATCC 700601 / ES114) (Vibrio fischeri).